Reading from the N-terminus, the 211-residue chain is Protein-L-isoaspartate O-methyltransferase (211 aa).

Residue Ser-62 is part of the active site.

It belongs to the methyltransferase superfamily. L-isoaspartyl/D-aspartyl protein methyltransferase family.

It localises to the cytoplasm. It carries out the reaction [protein]-L-isoaspartate + S-adenosyl-L-methionine = [protein]-L-isoaspartate alpha-methyl ester + S-adenosyl-L-homocysteine. Functionally, catalyzes the methyl esterification of L-isoaspartyl residues in peptides and proteins that result from spontaneous decomposition of normal L-aspartyl and L-asparaginyl residues. It plays a role in the repair and/or degradation of damaged proteins. The protein is Protein-L-isoaspartate O-methyltransferase of Shewanella amazonensis (strain ATCC BAA-1098 / SB2B).